A 450-amino-acid polypeptide reads, in one-letter code: Divalent metal cation transporter MntH (450 aa).

11 helical membrane-spanning segments follow: residues 34 to 54 (LSFL…GNWI), 61 to 81 (AQYG…AMLL), 108 to 128 (IAII…IAEV), 141 to 161 (IPLI…LFIM), 170 to 190 (AIVG…VYIS), 212 to 232 (GILY…NLYL), 263 to 283 (IQLS…ASLF), 305 to 325 (PVLG…ALLA), 361 to 381 (SLAV…AAKI), 383 to 403 (QLLV…LIPL), and 422 to 442 (VNII…YLIV).

It belongs to the NRAMP family.

Its subcellular location is the cell membrane. Functionally, h(+)-stimulated, divalent metal cation uptake system. The polypeptide is Divalent metal cation transporter MntH (Staphylococcus aureus (strain Mu3 / ATCC 700698)).